A 345-amino-acid polypeptide reads, in one-letter code: uncharacterized protein (345 aa).

Belongs to the methyltransferase superfamily.

This is an uncharacterized protein from Streptomyces fradiae (Streptomyces roseoflavus).